Reading from the N-terminus, the 350-residue chain is Lipoyl synthase (350 aa).

Positions M1–V39 are disordered. [4Fe-4S] cluster is bound by residues C73, C78, C84, C99, C103, C106, and S314. The region spanning W85–M303 is the Radical SAM core domain.

Belongs to the radical SAM superfamily. Lipoyl synthase family. The cofactor is [4Fe-4S] cluster.

It is found in the cytoplasm. It catalyses the reaction [[Fe-S] cluster scaffold protein carrying a second [4Fe-4S](2+) cluster] + N(6)-octanoyl-L-lysyl-[protein] + 2 oxidized [2Fe-2S]-[ferredoxin] + 2 S-adenosyl-L-methionine + 4 H(+) = [[Fe-S] cluster scaffold protein] + N(6)-[(R)-dihydrolipoyl]-L-lysyl-[protein] + 4 Fe(3+) + 2 hydrogen sulfide + 2 5'-deoxyadenosine + 2 L-methionine + 2 reduced [2Fe-2S]-[ferredoxin]. It functions in the pathway protein modification; protein lipoylation via endogenous pathway; protein N(6)-(lipoyl)lysine from octanoyl-[acyl-carrier-protein]: step 2/2. In terms of biological role, catalyzes the radical-mediated insertion of two sulfur atoms into the C-6 and C-8 positions of the octanoyl moiety bound to the lipoyl domains of lipoate-dependent enzymes, thereby converting the octanoylated domains into lipoylated derivatives. The protein is Lipoyl synthase of Ectopseudomonas mendocina (strain ymp) (Pseudomonas mendocina).